A 367-amino-acid chain; its full sequence is Quinolinate synthase (367 aa).

Histidine 46 and serine 63 together coordinate iminosuccinate. [4Fe-4S] cluster is bound at residue cysteine 110. Residues 141–143 (YVN) and serine 162 each bind iminosuccinate. A [4Fe-4S] cluster-binding site is contributed by cysteine 229. Iminosuccinate-binding positions include 255 to 257 (HPE) and threonine 272. Cysteine 319 contacts [4Fe-4S] cluster.

This sequence belongs to the quinolinate synthase family. Type 3 subfamily. Requires [4Fe-4S] cluster as cofactor.

The protein resides in the cytoplasm. It carries out the reaction iminosuccinate + dihydroxyacetone phosphate = quinolinate + phosphate + 2 H2O + H(+). Its pathway is cofactor biosynthesis; NAD(+) biosynthesis; quinolinate from iminoaspartate: step 1/1. In terms of biological role, catalyzes the condensation of iminoaspartate with dihydroxyacetone phosphate to form quinolinate. This chain is Quinolinate synthase, found in Bacillus velezensis (strain DSM 23117 / BGSC 10A6 / LMG 26770 / FZB42) (Bacillus amyloliquefaciens subsp. plantarum).